A 614-amino-acid polypeptide reads, in one-letter code: Sulfite reductase [NADPH] flavoprotein alpha-component (614 aa).

In terms of domain architecture, Flavodoxin-like spans 79 to 217 (LTIIFASQTG…AATEWRKQVL (139 aa)). Residues 85–90 (SQTGNA), 132–135 (STNG), and 168–177 (LGDSSYQFFC) each bind FMN. In terms of domain architecture, FAD-binding FR-type spans 249–463 (EQPYTASLST…VEHNNNFKLP (215 aa)). Residues Thr337, Thr371, 401 to 404 (RLYS), 419 to 421 (TVG), Tyr425, and 434 to 437 (GGAS) contribute to the FAD site. NADP(+) contacts are provided by residues 534-535 (SR), 540-544 (KVYVQ), and Asp576. Residue Tyr614 participates in FAD binding.

Belongs to the NADPH-dependent sulphite reductase flavoprotein subunit CysJ family. This sequence in the N-terminal section; belongs to the flavodoxin family. It in the C-terminal section; belongs to the flavoprotein pyridine nucleotide cytochrome reductase family. Alpha(8)-beta(8). The alpha component is a flavoprotein, the beta component is a hemoprotein. It depends on FAD as a cofactor. FMN is required as a cofactor.

It catalyses the reaction hydrogen sulfide + 3 NADP(+) + 3 H2O = sulfite + 3 NADPH + 4 H(+). It participates in sulfur metabolism; hydrogen sulfide biosynthesis; hydrogen sulfide from sulfite (NADPH route): step 1/1. Component of the sulfite reductase complex that catalyzes the 6-electron reduction of sulfite to sulfide. This is one of several activities required for the biosynthesis of L-cysteine from sulfate. The flavoprotein component catalyzes the electron flow from NADPH -&gt; FAD -&gt; FMN to the hemoprotein component. This is Sulfite reductase [NADPH] flavoprotein alpha-component from Vibrio cholerae serotype O1 (strain ATCC 39541 / Classical Ogawa 395 / O395).